A 310-amino-acid polypeptide reads, in one-letter code: p-hydroxybenzoic acid efflux pump subunit AaeA (310 aa).

A helical transmembrane segment spans residues 12 to 32; it reads AITVVLVILAFIAIFNAWVYY.

The protein belongs to the membrane fusion protein (MFP) (TC 8.A.1) family.

Its subcellular location is the cell inner membrane. In terms of biological role, forms an efflux pump with AaeB. This chain is p-hydroxybenzoic acid efflux pump subunit AaeA, found in Shigella sonnei (strain Ss046).